The sequence spans 211 residues: FMN-dependent NADH:quinone oxidoreductase 2 (211 aa).

FMN-binding positions include S10 and 17 to 19 (SRS).

This sequence belongs to the azoreductase type 1 family. Homodimer. The cofactor is FMN.

The catalysed reaction is 2 a quinone + NADH + H(+) = 2 a 1,4-benzosemiquinone + NAD(+). It carries out the reaction N,N-dimethyl-1,4-phenylenediamine + anthranilate + 2 NAD(+) = 2-(4-dimethylaminophenyl)diazenylbenzoate + 2 NADH + 2 H(+). In terms of biological role, quinone reductase that provides resistance to thiol-specific stress caused by electrophilic quinones. Functionally, also exhibits azoreductase activity. Catalyzes the reductive cleavage of the azo bond in aromatic azo compounds to the corresponding amines. The chain is FMN-dependent NADH:quinone oxidoreductase 2 from Listeria monocytogenes serotype 4b (strain F2365).